The primary structure comprises 270 residues: Glutamate racemase (270 aa).

Substrate-binding positions include 10–11 and 42–43; these read DS and YG. Residue Cys-74 is the Proton donor/acceptor of the active site. A substrate-binding site is contributed by 75 to 76; that stretch reads NT. Cys-189 functions as the Proton donor/acceptor in the catalytic mechanism. Substrate is bound at residue 190–191; that stretch reads TH.

It belongs to the aspartate/glutamate racemases family.

It carries out the reaction L-glutamate = D-glutamate. Its pathway is cell wall biogenesis; peptidoglycan biosynthesis. Functionally, provides the (R)-glutamate required for cell wall biosynthesis. The protein is Glutamate racemase of Bartonella quintana (strain Toulouse) (Rochalimaea quintana).